The chain runs to 449 residues: Probable rhamnogalacturonase E (449 aa).

A signal peptide spans 1–21 (MRSKTFSVLSSCLLLIATVQG). An intrachain disulfide couples Cys42 to Cys68. Asn53, Asn91, and Asn106 each carry an N-linked (GlcNAc...) asparagine glycan. Catalysis depends on Asp221, which acts as the Proton donor. Cys223 and Cys240 are disulfide-bonded. 2 N-linked (GlcNAc...) asparagine glycosylation sites follow: Asn241 and Asn256. The active site involves His296. The N-linked (GlcNAc...) asparagine glycan is linked to Asn323. 2 disulfides stabilise this stretch: Cys346/Cys352 and Cys374/Cys383.

The protein belongs to the glycosyl hydrolase 28 family.

It localises to the secreted. It carries out the reaction Endohydrolysis of alpha-D-GalA-(1-&gt;2)-alpha-L-Rha glycosidic bond in the rhamnogalacturonan I backbone with initial inversion of anomeric configuration releasing oligosaccharides with beta-D-GalA at the reducing end.. Pectinolytic enzymes consist of four classes of enzymes: pectine lyase, polygalacturonase, pectin methylesterase and rhamnogalacturonase. Hydrolyzes alpha-D-galacturonopyranosyl-(1,2)-alpha-L-rhamnopyranosyl linkages in the backbone of the hairy regions of pectins. The chain is Probable rhamnogalacturonase E (rhgE) from Aspergillus flavus (strain ATCC 200026 / FGSC A1120 / IAM 13836 / NRRL 3357 / JCM 12722 / SRRC 167).